The sequence spans 391 residues: Transaldolase (391 aa).

Positions 1 to 329 are transaldolase; sequence MGKNLLEQLR…RLKVLDGQEH (329 aa). K136 serves as the catalytic Schiff-base intermediate with substrate. EF-hand domains lie at 329 to 364 and 365 to 387; these read HIKH…FDAL and DRDH…AFRL. Ca(2+)-binding residues include D342, D344, D346, E353, D365, D367, D369, K371, and E376.

The protein belongs to the transaldolase family. Type 1 subfamily.

It localises to the cytoplasm. The catalysed reaction is D-sedoheptulose 7-phosphate + D-glyceraldehyde 3-phosphate = D-erythrose 4-phosphate + beta-D-fructose 6-phosphate. The protein operates within carbohydrate degradation; pentose phosphate pathway; D-glyceraldehyde 3-phosphate and beta-D-fructose 6-phosphate from D-ribose 5-phosphate and D-xylulose 5-phosphate (non-oxidative stage): step 2/3. Functionally, transaldolase is important for the balance of metabolites in the pentose-phosphate pathway. The chain is Transaldolase from Synechocystis sp. (strain ATCC 27184 / PCC 6803 / Kazusa).